A 283-amino-acid chain; its full sequence is 3-methyl-2-oxobutanoate hydroxymethyltransferase (283 aa).

The Mg(2+) site is built by aspartate 44 and aspartate 83. 3-methyl-2-oxobutanoate-binding positions include 44-45 (DS), aspartate 83, and lysine 112. Glutamate 114 is a Mg(2+) binding site. Catalysis depends on glutamate 181, which acts as the Proton acceptor.

Belongs to the PanB family. As to quaternary structure, homodecamer; pentamer of dimers. Mg(2+) serves as cofactor.

The protein localises to the cytoplasm. The enzyme catalyses 3-methyl-2-oxobutanoate + (6R)-5,10-methylene-5,6,7,8-tetrahydrofolate + H2O = 2-dehydropantoate + (6S)-5,6,7,8-tetrahydrofolate. Its pathway is cofactor biosynthesis; coenzyme A biosynthesis. In terms of biological role, catalyzes the reversible reaction in which hydroxymethyl group from 5,10-methylenetetrahydrofolate is transferred onto alpha-ketoisovalerate to form ketopantoate. This Pyrococcus furiosus (strain ATCC 43587 / DSM 3638 / JCM 8422 / Vc1) protein is 3-methyl-2-oxobutanoate hydroxymethyltransferase.